The following is a 378-amino-acid chain: Flap endonuclease 1 (378 aa).

The N-domain stretch occupies residues 1–105 (MGIKGLNSII…HELDKRTERR (105 aa)). D34 contributes to the Mg(2+) binding site. DNA-binding residues include R47 and R71. Mg(2+) is bound by residues D87, E156, E158, D177, and D179. The I-domain stretch occupies residues 120 to 251 (EIMKHERRLV…VTALKLIKEH (132 aa)). DNA is bound at residue E156. DNA contacts are provided by G229 and D231. Mg(2+) is bound at residue D231. Residues 337 to 345 (VQGRLDSFF) form an interaction with PCNA region. A compositionally biased stretch (low complexity) spans 356–367 (AASARKAQAAKK). The tract at residues 356-378 (AASARKAQAAKKTNQKGKVLKRR) is disordered. Residues 368–378 (TNQKGKVLKRR) show a composition bias toward basic residues.

This sequence belongs to the XPG/RAD2 endonuclease family. FEN1 subfamily. In terms of assembly, interacts with PCNA. Three molecules of FEN1 bind to one PCNA trimer with each molecule binding to one PCNA monomer. PCNA stimulates the nuclease activity without altering cleavage specificity. It depends on Mg(2+) as a cofactor. In terms of processing, phosphorylated. Phosphorylation upon DNA damage induces relocalization to the nuclear plasma.

The protein resides in the nucleus. The protein localises to the nucleolus. It is found in the nucleoplasm. Its subcellular location is the mitochondrion. Functionally, structure-specific nuclease with 5'-flap endonuclease and 5'-3' exonuclease activities involved in DNA replication and repair. During DNA replication, cleaves the 5'-overhanging flap structure that is generated by displacement synthesis when DNA polymerase encounters the 5'-end of a downstream Okazaki fragment. It enters the flap from the 5'-end and then tracks to cleave the flap base, leaving a nick for ligation. Also involved in the long patch base excision repair (LP-BER) pathway, by cleaving within the apurinic/apyrimidinic (AP) site-terminated flap. Acts as a genome stabilization factor that prevents flaps from equilibrating into structures that lead to duplications and deletions. Also possesses 5'-3' exonuclease activity on nicked or gapped double-stranded DNA, and exhibits RNase H activity. Also involved in replication and repair of rDNA and in repairing mitochondrial DNA. This is Flap endonuclease 1 from Eremothecium gossypii (strain ATCC 10895 / CBS 109.51 / FGSC 9923 / NRRL Y-1056) (Yeast).